The following is a 187-amino-acid chain: Peroxisome assembly protein 22 (187 aa).

The helical transmembrane segment at 7–29 threads the bilayer; that stretch reads NTFFGLAALGALGLGYSVYKSFI.

It belongs to the peroxin-22 family. Interacts with PEX4.

Its subcellular location is the peroxisome membrane. Involved in peroxisome biogenesis. This is Peroxisome assembly protein 22 (PEX22) from Komagataella pastoris (Yeast).